Reading from the N-terminus, the 117-residue chain is Hainantoxin-XV-3 (117 aa).

The first 20 residues, 1–20, serve as a signal peptide directing secretion; that stretch reads MKLCAVIIASLLVCVAVASS. A disordered region spans residues 20–55; the sequence is SSDNQKEFAQEKEMTREETQSLGEHEKDDEVTGSEE. Positions 21-56 are excised as a propeptide; that stretch reads SDNQKEFAQEKEMTREETQSLGEHEKDDEVTGSEER. Positions 23–55 are enriched in basic and acidic residues; the sequence is NQKEFAQEKEMTREETQSLGEHEKDDEVTGSEE. Disulfide bonds link Cys58/Cys72, Cys65/Cys78, Cys69/Cys115, and Cys71/Cys91.

Belongs to the neurotoxin 03 (Tx2) family. 02 subfamily. HNTX-XV sub-subfamily. In terms of tissue distribution, expressed by the venom gland.

The protein resides in the secreted. Putative ion channel inhibitor. The sequence is that of Hainantoxin-XV-3 from Cyriopagopus hainanus (Chinese bird spider).